Consider the following 318-residue polypeptide: Olfactory receptor-like protein COR3 (318 aa).

At 1 to 26 (MASGNCTTPTTFILSGLTDNPGLQMP) the chain is on the extracellular side. N-linked (GlcNAc...) asparagine glycosylation is present at N5. A helical transmembrane segment spans residues 27-49 (LFMVFLAIYTITLLTNLGLIRLI). Residues 50-57 (SVDLHLQT) lie on the Cytoplasmic side of the membrane. The helical transmembrane segment at 58 to 79 (PMYIFLQNLSFTDAAYSTVITP) threads the bilayer. Topologically, residues 80–100 (KMLATFLEERKTISYVGCILQ) are extracellular. The cysteines at positions 97 and 179 are disulfide-linked. Residues 101-120 (YFSFVLLTTSECLLLAVMAY) form a helical membrane-spanning segment. The Cytoplasmic segment spans residues 121 to 139 (DRYVAICKPLLYPAIMTKA). The helical transmembrane segment at 140-164 (VCWRLVESLYFLAFLNSLVHTCGLL) threads the bilayer. At 165 to 205 (KLSFCYSNVVNHFFCDISPLFQISSSSIAISELLVIISGSL) the chain is on the extracellular side. Residues 206–226 (FVMSSIIIILISYVFIILTVV) traverse the membrane as a helical segment. The Cytoplasmic portion of the chain corresponds to 227 to 239 (MIRSKDGKYKAFS). Residues 240–260 (TCTSHLMAVSLFHGTVIFMYL) form a helical membrane-spanning segment. Residues 261–271 (RPVKLFSLDTD) are Extracellular-facing. The helical transmembrane segment at 272 to 292 (KIASLFYTVVIPMLNPLIYSW) threads the bilayer. The Cytoplasmic segment spans residues 293–318 (RNKEVKDALRRLTATTFGFIDSKAVQ).

The protein belongs to the G-protein coupled receptor 1 family.

It localises to the cell membrane. Functionally, odorant receptor. The sequence is that of Olfactory receptor-like protein COR3 (COR3) from Gallus gallus (Chicken).